The following is a 565-amino-acid chain: Oxygen-dependent choline dehydrogenase (565 aa).

6–35 is an FAD binding site; it reads DYIIVGAGSAGNTLATRLTEDAGVTVLLLE. Catalysis depends on His475, which acts as the Proton acceptor.

This sequence belongs to the GMC oxidoreductase family. FAD is required as a cofactor.

It carries out the reaction choline + A = betaine aldehyde + AH2. It catalyses the reaction betaine aldehyde + NAD(+) + H2O = glycine betaine + NADH + 2 H(+). The protein operates within amine and polyamine biosynthesis; betaine biosynthesis via choline pathway; betaine aldehyde from choline (cytochrome c reductase route): step 1/1. Its function is as follows. Involved in the biosynthesis of the osmoprotectant glycine betaine. Catalyzes the oxidation of choline to betaine aldehyde and betaine aldehyde to glycine betaine at the same rate. In Pseudomonas putida (strain GB-1), this protein is Oxygen-dependent choline dehydrogenase.